The primary structure comprises 140 residues: Nucleoside diphosphate kinase (140 aa).

Positions 11, 59, 87, 93, 104, and 114 each coordinate ATP. Residue histidine 117 is the Pros-phosphohistidine intermediate of the active site.

Belongs to the NDK family. Homotetramer. Mg(2+) serves as cofactor.

The protein resides in the cytoplasm. The catalysed reaction is a 2'-deoxyribonucleoside 5'-diphosphate + ATP = a 2'-deoxyribonucleoside 5'-triphosphate + ADP. It catalyses the reaction a ribonucleoside 5'-diphosphate + ATP = a ribonucleoside 5'-triphosphate + ADP. Functionally, major role in the synthesis of nucleoside triphosphates other than ATP. The ATP gamma phosphate is transferred to the NDP beta phosphate via a ping-pong mechanism, using a phosphorylated active-site intermediate. The protein is Nucleoside diphosphate kinase of Rhodospirillum centenum (strain ATCC 51521 / SW).